The sequence spans 281 residues: NADPH-dependent 7-cyano-7-deazaguanine reductase (281 aa).

88–90 (IES) contributes to the substrate binding site. An NADPH-binding site is contributed by 90-91 (SK). Residue C189 is the Thioimide intermediate of the active site. The active-site Proton donor is the D196. 228–229 (HE) serves as a coordination point for substrate. 257–258 (RG) contributes to the NADPH binding site.

This sequence belongs to the GTP cyclohydrolase I family. QueF type 2 subfamily. Homodimer.

Its subcellular location is the cytoplasm. It carries out the reaction 7-aminomethyl-7-carbaguanine + 2 NADP(+) = 7-cyano-7-deazaguanine + 2 NADPH + 3 H(+). Its pathway is tRNA modification; tRNA-queuosine biosynthesis. Catalyzes the NADPH-dependent reduction of 7-cyano-7-deazaguanine (preQ0) to 7-aminomethyl-7-deazaguanine (preQ1). The polypeptide is NADPH-dependent 7-cyano-7-deazaguanine reductase (Proteus mirabilis (strain HI4320)).